The sequence spans 439 residues: tRNA(Ile)-lysidine synthase (439 aa).

23-28 lines the ATP pocket; that stretch reads SGGLDS.

It belongs to the tRNA(Ile)-lysidine synthase family.

It localises to the cytoplasm. The enzyme catalyses cytidine(34) in tRNA(Ile2) + L-lysine + ATP = lysidine(34) in tRNA(Ile2) + AMP + diphosphate + H(+). Ligates lysine onto the cytidine present at position 34 of the AUA codon-specific tRNA(Ile) that contains the anticodon CAU, in an ATP-dependent manner. Cytidine is converted to lysidine, thus changing the amino acid specificity of the tRNA from methionine to isoleucine. This chain is tRNA(Ile)-lysidine synthase, found in Methylococcus capsulatus (strain ATCC 33009 / NCIMB 11132 / Bath).